Consider the following 427-residue polypeptide: Enolase (427 aa).

Gln163 is a binding site for (2R)-2-phosphoglycerate. The Proton donor role is filled by Glu205. The Mg(2+) site is built by Asp242, Glu285, and Asp312. Residues Lys337, Arg366, Ser367, and Lys388 each contribute to the (2R)-2-phosphoglycerate site. Lys337 functions as the Proton acceptor in the catalytic mechanism.

It belongs to the enolase family. The cofactor is Mg(2+).

It is found in the cytoplasm. The protein resides in the secreted. Its subcellular location is the cell surface. The catalysed reaction is (2R)-2-phosphoglycerate = phosphoenolpyruvate + H2O. Its pathway is carbohydrate degradation; glycolysis; pyruvate from D-glyceraldehyde 3-phosphate: step 4/5. Functionally, catalyzes the reversible conversion of 2-phosphoglycerate (2-PG) into phosphoenolpyruvate (PEP). It is essential for the degradation of carbohydrates via glycolysis. This chain is Enolase, found in Burkholderia vietnamiensis (strain G4 / LMG 22486) (Burkholderia cepacia (strain R1808)).